We begin with the raw amino-acid sequence, 668 residues long: Transketolase (668 aa).

Substrate is bound at residue histidine 28. Thiamine diphosphate is bound by residues histidine 68 and 116-118; that span reads GPL. Residue aspartate 157 participates in Mg(2+) binding. The thiamine diphosphate site is built by glycine 158 and asparagine 187. Positions 187 and 189 each coordinate Mg(2+). Residues histidine 263, arginine 358, and serine 385 each contribute to the substrate site. Histidine 263 provides a ligand contact to thiamine diphosphate. Glutamate 412 (proton donor) is an active-site residue. A thiamine diphosphate-binding site is contributed by phenylalanine 438. The substrate site is built by histidine 462, aspartate 470, histidine 474, and arginine 521.

The protein belongs to the transketolase family. Homodimer. It depends on Mg(2+) as a cofactor. The cofactor is thiamine diphosphate.

It carries out the reaction D-sedoheptulose 7-phosphate + D-glyceraldehyde 3-phosphate = aldehydo-D-ribose 5-phosphate + D-xylulose 5-phosphate. Its function is as follows. Catalyzes the transfer of a two-carbon ketol group from a ketose donor to an aldose acceptor, likely via a covalent intermediate with the cofactor thiamine pyrophosphate. Can use L-erythrulose as donor and D-ribose-5-phosphate as acceptor substrates, forming glycolaldehyde and D-sedoheptulose-7-phosphate. For synthetic purposes, is able to use hydroxypyruvate (HPA) as donor substrate, making the reaction irreversible due to the release of carbon dioxide, and various aldehydes as acceptor substrates, which leads to the corresponding ketoses. Thus, using hydroxypyruvate as donor and three different aldehydes as acceptors, i.e. glycolaldehyde, D-glyceraldehyde and butyraldehyde, the enzyme stereoselectively forms the corresponding products L-erythrulose, D-xylulose and (3S)-1,3-dihydroxyhexan-2-one, respectively. The polypeptide is Transketolase (Geobacillus stearothermophilus (Bacillus stearothermophilus)).